The sequence spans 528 residues: Beta-galactoside alpha-2,6-sialyltransferase 2 (528 aa).

The Cytoplasmic portion of the chain corresponds to 1 to 10; that stretch reads MKPNLKQWKQ. A helical; Signal-anchor for type II membrane protein transmembrane segment spans residues 11–31; the sequence is LMLFGIFAWGLLFLVIFIYFT. Topologically, residues 32–528 are lumenal; that stretch reads DSNSAEPVPS…CPERNNFPPL (497 aa). Residues Asn167, Asn308, and Asn338 are each glycosylated (N-linked (GlcNAc...) asparagine). 3 disulfides stabilise this stretch: Cys254–Cys519, Cys297–Cys448, and Cys466–Cys477.

Belongs to the glycosyltransferase 29 family.

It localises to the golgi apparatus. It is found in the golgi stack membrane. The catalysed reaction is a beta-D-galactoside + CMP-N-acetyl-beta-neuraminate = an N-acetyl-alpha-neuraminyl-(2-&gt;6)-beta-D-galactosyl derivative + CMP + H(+). Functionally, transfers sialic acid from the donor of substrate CMP-sialic acid to galactose containing acceptor substrates. The polypeptide is Beta-galactoside alpha-2,6-sialyltransferase 2 (ST6GAL2) (Gallus gallus (Chicken)).